We begin with the raw amino-acid sequence, 278 residues long: Large ribosomal subunit protein uL2 (278 aa).

2 disordered regions span residues 28 to 58 (TPEK…GGGH) and 223 to 278 (GVVM…KNKR). Residues 43 to 53 (RNNQGRITTRH) are compositionally biased toward polar residues. Residues 268–278 (IRRRKTGKNKR) are compositionally biased toward basic residues.

The protein belongs to the universal ribosomal protein uL2 family. In terms of assembly, part of the 50S ribosomal subunit. Forms a bridge to the 30S subunit in the 70S ribosome.

One of the primary rRNA binding proteins. Required for association of the 30S and 50S subunits to form the 70S ribosome, for tRNA binding and peptide bond formation. It has been suggested to have peptidyltransferase activity; this is somewhat controversial. Makes several contacts with the 16S rRNA in the 70S ribosome. The chain is Large ribosomal subunit protein uL2 from Nocardioides sp. (strain ATCC BAA-499 / JS614).